Here is an 86-residue protein sequence, read N- to C-terminus: Omega-theraphotoxin-Hhn1a 2 (86 aa).

The signal sequence occupies residues Met1–Ala21. Positions Ser22–Arg50 are excised as a propeptide. 3 cysteine pairs are disulfide-bonded: Cys52/Cys66, Cys59/Cys71, and Cys65/Cys78.

The protein belongs to the neurotoxin 10 (Hwtx-1) family. 17 (Hntx-9) subfamily. Expressed by the venom gland.

It localises to the secreted. Ion channel inhibitor. This is Omega-theraphotoxin-Hhn1a 2 from Cyriopagopus hainanus (Chinese bird spider).